Reading from the N-terminus, the 838-residue chain is U1 SNP1-associating protein 1 (838 aa).

Residues 1-536 lie on the Cytoplasmic side of the membrane; that stretch reads MSEYLAQTPC…VRPLRNSFPL (536 aa). The interval 31–240 is required for ERAD-L function; sequence HPLSTVGRLL…DFAPAHNSFF (210 aa). Positions 259–318 constitute a Ubiquitin-like domain; it reads ERFVLEFISDATLSITQMNVKPDTTVKQVKDFICSVYTHSLNLRRNDIKLIYKGQLLHEN. The tract at residues 319 to 418 is important for HRD1 oligomer formation; sequence NFAGNSSKIS…VPTDELYRKC (100 aa). Residues 345 to 535 form an interaction with HRD1 region; it reads QEYTESGPGF…VVRPLRNSFP (191 aa). 3 positions are modified to phosphoserine: Ser-374, Ser-376, and Ser-379. The tract at residues 437 to 490 is required for ERAD-L function and HRD1 oligomer formation; that stretch reads SSYLSVIKGDYGEIKIPISSNDYRINGDNILLSPSAIEQLESALNFKIERPRDS. A helical membrane pass occupies residues 537 to 559; the sequence is LLVLIRTFYLIGYNSLVPFFIIL. Topologically, residues 560–563 are extracellular; sequence EFGS. The helical transmembrane segment at 564 to 583 threads the bilayer; the sequence is FLPWKYIILLSLLFIFRTVW. The Cytoplasmic segment spans residues 584-838; the sequence is NTQEVWNLWR…QPHLYIPDED (255 aa). Residues 584-838 are interaction with DER1; sequence NTQEVWNLWR…QPHLYIPDED (255 aa). The disordered stretch occupies residues 795-838; it reads ARDREQPAPSAQQQENEDEALIIPDEEEPTATGAQPHLYIPDED. The span at 809-823 shows a compositional bias: acidic residues; it reads ENEDEALIIPDEEEP.

As to quaternary structure, component of the HRD1 ubiquitin ligase complex which contains the E3 ligase HRD1, its cofactors HRD3, USA1 and DER1, substrate recruiting factor YOS9 and CDC48-binding protein UBX2. Within the complex, interacts directly with HRD1 (via N-terminus) and DER1 (via C-terminus) and indirectly with HRD3. In ERAD-L, HRD3 and YOS9 jointly bind misfolded glycoproteins in the endoplasmic reticulum (ER) lumen. Movement of ERAD-L substrates through the ER membrane is facilitated by HRD1 and DER1 which have lateral gates facing each other and which distort the membrane region between the lateral gates, making it much thinner than a normal phospholipid bilayer. Substrates insert into the membrane as a hairpin loop with one strand interacting with DER1 and the other with HRD1. The HRD1 complex interacts with the heterotrimeric CDC48-NPL4-UFD1 ATPase complex which is recruited by UBX2 via its interaction with CDC48 and which moves ubiquitinated substrates to the cytosol for targeting to the proteasome.

The protein resides in the endoplasmic reticulum membrane. In terms of biological role, scaffold protein of the endoplasmic reticulum-associated degradation (ERAD) (also known as endoplasmic reticulum quality control, ERQC) pathway involved in ubiquitin-dependent degradation of misfolded endoplasmic reticulum proteins. Component of the HRD1 ubiquitin ligase complex, which is part of the ERAD-L and ERAD-M pathways responsible for the rapid degradation of soluble lumenal and membrane proteins with misfolded lumenal domains (ERAD-L), or ER-membrane proteins with misfolded transmembrane domains (ERAD-M). Has multiple functions in ERAD including recruitment of DER1 to the HRD1 ubiquitin ligase, and regulation of HRD1 activity. Involved in oligomerization of HRD1 and in HRD1 autoubiquitination and degradation. The polypeptide is U1 SNP1-associating protein 1 (USA1) (Saccharomyces cerevisiae (strain ATCC 204508 / S288c) (Baker's yeast)).